The primary structure comprises 370 residues: Ubiquitin carboxyl-terminal hydrolase 12 (370 aa).

Residues 1–4 carry the Required for plasma membrane localization of USP12/WDR20 motif; it reads MEIL. One can recognise a USP domain in the interval 39-369; it reads FGLVNFGNTC…SGYILFYQSR (331 aa). Cys-48 functions as the Nucleophile in the catalytic mechanism. Residues 146-157 are compositionally biased toward basic and acidic residues; the sequence is QEKQNGRLRNGD. Positions 146 to 168 are disordered; that stretch reads QEKQNGRLRNGDVDSEDNNSTPD. Zn(2+) is bound by residues Cys-186, Cys-189, Cys-233, and Cys-236. Residue His-317 is the Proton acceptor of the active site.

The protein belongs to the peptidase C19 family. USP12/USP46 subfamily. As to quaternary structure, interacts with WDR48. Interacts with WDR20; this interaction promotes translocation of the USP12 complex to the plasma membrane. Component of the USP12-WDR20-WDR48 deubiquitinating complex. Component of the USP12-DMWD-WDR48 deubiquitinating complex. Interacts with PHLPP1. Interacts with RBPJ. Interacts with CBP; this interaction blocks the acetyltransferase activity of CREBBP. Interacts with ITCH; the interaction is more efficient when both USP12 and WDR48/UAF1 are involved and may mediate recruitment of the USP12 deubiquitinating complex to Notch.

It is found in the nucleus. It localises to the cytoplasm. The protein localises to the cell membrane. The enzyme catalyses Thiol-dependent hydrolysis of ester, thioester, amide, peptide and isopeptide bonds formed by the C-terminal Gly of ubiquitin (a 76-residue protein attached to proteins as an intracellular targeting signal).. With respect to regulation, activated by interaction with WDR20, WDR48 and DMWD through different allosteric mechanisms. In terms of biological role, deubiquitinating enzyme that plays various roles in the regulation of the immune response and inflammation. During TCR engagement and activation, translocates into the cytoplasm and deubiquitinates its substrates LAT and TRAT1 and prevents their lysosome-dependent degradation to stabilize the TCR signaling complex at the plasma membrane. Plays an essential role in the selective LPS-induced macrophage response through the activation of NF-kappa-B pathway. In addition, promotes that antiviral immune response through targeting DNA sensor IFI16 to inhibit its proteasome-dependent degradation. Participates in the interferon signaling pathway and antiviral response independently of its deubiquitinase activity by maintaining nuclear phosphorylated STAT1 levels via inhibition of its CREBBP-mediated acetylation and subsequent dephosphorylation. Plays an intrinsic role in promoting the differentiation, activation and proliferation of CD4(+) T-cell by activating the NF-kappa-B signaling pathway through deubiquitinating and stabilizing B-cell lymphoma/leukemia 10/BCL10. In myeloid-derived suppressor cells promotes the activation of the NF-kappa-B via deubiquitination and stabilization of RELA. Regulates the 'Lys-63'-linked polyubiquitin chains of BAX and thereby modulates the mitochondrial apoptotic process. Negative regulator of NOTCH signaling that specifically deubiquitinates non-activated NOTCH receptors to target them for lysosomal degradation; deubiquitination of NOTCH stimulates its transport form late endosomes to lysosomes. Protects neurons against HTT/huntingtin-induced polyglutamine expansion-dependent neurodegeneration through regulation of autophagic flux. This function is independent of deubiquitinase activity or of other components of the USP12-WDR20-WDR48 deubiquitinating complex. In complex with WDR48, acts as a potential tumor suppressor by positively regulating PHLPP1 stability. The chain is Ubiquitin carboxyl-terminal hydrolase 12 from Rattus norvegicus (Rat).